Reading from the N-terminus, the 142-residue chain is Large ribosomal subunit protein uL11 (142 aa).

Belongs to the universal ribosomal protein uL11 family. As to quaternary structure, part of the ribosomal stalk of the 50S ribosomal subunit. Interacts with L10 and the large rRNA to form the base of the stalk. L10 forms an elongated spine to which L12 dimers bind in a sequential fashion forming a multimeric L10(L12)X complex. One or more lysine residues are methylated.

In terms of biological role, forms part of the ribosomal stalk which helps the ribosome interact with GTP-bound translation factors. In Nitrobacter winogradskyi (strain ATCC 25391 / DSM 10237 / CIP 104748 / NCIMB 11846 / Nb-255), this protein is Large ribosomal subunit protein uL11.